Consider the following 217-residue polypeptide: Non-structural protein NS3 (217 aa).

Belongs to the orbivirus NS3 family.

Functionally, may play a role in the release of virions from infected cells. This chain is Non-structural protein NS3 (Segment-10), found in Camelus dromedarius (Dromedary).